A 570-amino-acid chain; its full sequence is Proline--tRNA ligase (570 aa).

The protein belongs to the class-II aminoacyl-tRNA synthetase family. ProS type 1 subfamily. As to quaternary structure, homodimer.

It is found in the cytoplasm. The enzyme catalyses tRNA(Pro) + L-proline + ATP = L-prolyl-tRNA(Pro) + AMP + diphosphate. Functionally, catalyzes the attachment of proline to tRNA(Pro) in a two-step reaction: proline is first activated by ATP to form Pro-AMP and then transferred to the acceptor end of tRNA(Pro). As ProRS can inadvertently accommodate and process non-cognate amino acids such as alanine and cysteine, to avoid such errors it has two additional distinct editing activities against alanine. One activity is designated as 'pretransfer' editing and involves the tRNA(Pro)-independent hydrolysis of activated Ala-AMP. The other activity is designated 'posttransfer' editing and involves deacylation of mischarged Ala-tRNA(Pro). The misacylated Cys-tRNA(Pro) is not edited by ProRS. The protein is Proline--tRNA ligase of Geotalea daltonii (strain DSM 22248 / JCM 15807 / FRC-32) (Geobacter daltonii).